We begin with the raw amino-acid sequence, 224 residues long: Enolase-phosphatase E1 (224 aa).

It belongs to the HAD-like hydrolase superfamily. MasA/MtnC family. In terms of assembly, monomer. Mg(2+) serves as cofactor.

It catalyses the reaction 5-methylsulfanyl-2,3-dioxopentyl phosphate + H2O = 1,2-dihydroxy-5-(methylsulfanyl)pent-1-en-3-one + phosphate. The protein operates within amino-acid biosynthesis; L-methionine biosynthesis via salvage pathway; L-methionine from S-methyl-5-thio-alpha-D-ribose 1-phosphate: step 3/6. Its pathway is amino-acid biosynthesis; L-methionine biosynthesis via salvage pathway; L-methionine from S-methyl-5-thio-alpha-D-ribose 1-phosphate: step 4/6. Its function is as follows. Bifunctional enzyme that catalyzes the enolization of 2,3-diketo-5-methylthiopentyl-1-phosphate (DK-MTP-1-P) into the intermediate 2-hydroxy-3-keto-5-methylthiopentenyl-1-phosphate (HK-MTPenyl-1-P), which is then dephosphorylated to form the acireductone 1,2-dihydroxy-3-keto-5-methylthiopentene (DHK-MTPene). This chain is Enolase-phosphatase E1, found in Thioalkalivibrio sulfidiphilus (strain HL-EbGR7).